Reading from the N-terminus, the 142-residue chain is Hemoglobin subunit alpha (142 aa).

The region spanning 2–142 (VLSPTDKSNV…VSTVLTSKYR (141 aa)) is the Globin domain. Residue S4 is modified to Phosphoserine. Residues K8 and K12 each carry the N6-succinyllysine modification. Residue K17 is modified to N6-acetyllysine; alternate. At K17 the chain carries N6-succinyllysine; alternate. Y25 is modified (phosphotyrosine). K41 carries the post-translational modification N6-succinyllysine. H59 is a binding site for O2. H88 contacts heme b. Position 103 is a phosphoserine (S103). Residue T109 is modified to Phosphothreonine. 2 positions are modified to phosphoserine: S125 and S132. 2 positions are modified to phosphothreonine: T135 and T138. S139 carries the phosphoserine modification.

This sequence belongs to the globin family. In terms of assembly, heterotetramer of two alpha chains and two beta chains. In terms of tissue distribution, red blood cells.

Involved in oxygen transport from the lung to the various peripheral tissues. In terms of biological role, hemopressin acts as an antagonist peptide of the cannabinoid receptor CNR1. Hemopressin-binding efficiently blocks cannabinoid receptor CNR1 and subsequent signaling. The polypeptide is Hemoglobin subunit alpha (HBA) (Balaenoptera acutorostrata (Common minke whale)).